A 232-amino-acid polypeptide reads, in one-letter code: Large ribosomal subunit protein uL3 (232 aa).

Belongs to the universal ribosomal protein uL3 family. Part of the 50S ribosomal subunit. Forms a cluster with proteins L14 and L19.

Functionally, one of the primary rRNA binding proteins, it binds directly near the 3'-end of the 23S rRNA, where it nucleates assembly of the 50S subunit. This is Large ribosomal subunit protein uL3 from Sorangium cellulosum (strain So ce56) (Polyangium cellulosum (strain So ce56)).